Reading from the N-terminus, the 232-residue chain is MDSKIIVALDYETEAEALSLVDQIDPSLCRLKVGKEMFTTLGTNFVKQLQERKFDVFLDLKFHDIPNTVARAVRSAADLGVWMVDLHASGGLRMMEEAKNILEPYGKDAPILIGVTVLTSMEDLDLLQIGINASPMEQVIRLAHLTQRAGLDGVVCSPQEVEILRKNLGSDFKLVTPGIRPVGSEFGDQRRVMTPSAAVRSGADYLVIGRPITQAENPAEVLRSINASLANI.

Residues D10, K32, 59-68 (DLKFHDIPNT), T119, R180, Q189, G209, and R210 contribute to the substrate site. K61 (proton donor) is an active-site residue.

Belongs to the OMP decarboxylase family. Type 1 subfamily. In terms of assembly, homodimer.

It carries out the reaction orotidine 5'-phosphate + H(+) = UMP + CO2. The protein operates within pyrimidine metabolism; UMP biosynthesis via de novo pathway; UMP from orotate: step 2/2. Its function is as follows. Catalyzes the decarboxylation of orotidine 5'-monophosphate (OMP) to uridine 5'-monophosphate (UMP). The polypeptide is Orotidine 5'-phosphate decarboxylase (Actinobacillus succinogenes (strain ATCC 55618 / DSM 22257 / CCUG 43843 / 130Z)).